A 191-amino-acid polypeptide reads, in one-letter code: UPF0149 protein VCM66_2399 (191 aa).

Belongs to the UPF0149 family.

The protein is UPF0149 protein VCM66_2399 of Vibrio cholerae serotype O1 (strain M66-2).